The primary structure comprises 78 residues: Translation initiation factor IF-1 (78 aa).

The region spanning 2–78 (SKNNLNETES…TRARITYRFK (77 aa)) is the S1-like domain.

The protein belongs to the IF-1 family. In terms of assembly, component of the 30S ribosomal translation pre-initiation complex which assembles on the 30S ribosome in the order IF-2 and IF-3, IF-1 and N-formylmethionyl-tRNA(fMet); mRNA recruitment can occur at any time during PIC assembly.

It is found in the cytoplasm. Its function is as follows. One of the essential components for the initiation of protein synthesis. Stabilizes the binding of IF-2 and IF-3 on the 30S subunit to which N-formylmethionyl-tRNA(fMet) subsequently binds. Helps modulate mRNA selection, yielding the 30S pre-initiation complex (PIC). Upon addition of the 50S ribosomal subunit IF-1, IF-2 and IF-3 are released leaving the mature 70S translation initiation complex. The chain is Translation initiation factor IF-1 from Onion yellows phytoplasma (strain OY-M).